Reading from the N-terminus, the 33-residue chain is Photosystem II reaction center protein Psb30 (33 aa).

A helical transmembrane segment spans residues 7 to 27; the sequence is IQLGSLTLITLTGPLIIGIIF.

Belongs to the Psb30/Ycf12 family. PSII is composed of 1 copy each of membrane proteins PsbA, PsbB, PsbC, PsbD, PsbE, PsbF, PsbH, PsbI, PsbJ, PsbK, PsbL, PsbM, PsbT, PsbY, PsbZ, Psb30/Ycf12, peripheral proteins of the oxygen-evolving complex and a large number of cofactors. It forms dimeric complexes.

It is found in the plastid. The protein localises to the chloroplast thylakoid membrane. Functionally, a core subunit of photosystem II (PSII), probably helps stabilize the reaction center. The sequence is that of Photosystem II reaction center protein Psb30 from Euglena gracilis.